The sequence spans 41 residues: U-theraphotoxin-Lk1a (41 aa).

Cystine bridges form between Cys-1–Cys-16, Cys-8–Cys-21, and Cys-15–Cys-36.

This sequence belongs to the neurotoxin 14 (magi-1) family. 08 (Ltx-4) subfamily. As to expression, expressed by the venom gland.

It is found in the secreted. Its function is as follows. Toxin that causes irreversible contractile paralysis in adult Aedes aegypti resulting in 100% mortality after 24 hours. In Lasiodora klugi (Bahia scarlet tarantula), this protein is U-theraphotoxin-Lk1a.